The sequence spans 171 residues: Protein TIFY 11d (171 aa).

A Tify domain is found at 65–100 (PSAGTAPLTIFYDGRMVVVDDVPVEKAAELMRLAGS). The short motif at 117–142 (PIARKASLQRFLQKRKHRITTTSEPY) is the Jas element. Residues 119–126 (ARKASLQR) carry the Nuclear localization signal motif.

It belongs to the TIFY/JAZ family. Interacts with BHLH148 and COI1A. Interacts with COI1A, COI1B and COI2 in a coronatine-dependent manner. Coronatine is an analog of jasmonoyl isoleucine (JA-Ile). In terms of processing, ubiquitinated. Increase in jasmonoyl isoleucine (JA-Ile) levels mediates its degradation via COI1A-mediated proteasome pathway.

The protein localises to the nucleus. Repressor of jasmonate (JA) responses. May act on an initial response of JA-regulated gene expression toward drought tolerance as part of a BHLH148-TIFY11D/JAZ12-COI1A complex. This is Protein TIFY 11d from Oryza sativa subsp. japonica (Rice).